The primary structure comprises 623 residues: Glucokinase regulatory protein (623 aa).

SIS domains are found at residues 90-286 and 320-476; these read VQEV…QGVV and VGIS…VQKF. Beta-D-fructose 1-phosphate is bound by residues 109-110, Glu-153, and 179-181; these read TS and SVG. 109-110 contributes to the beta-D-fructose 6-phosphate binding site; the sequence is TS. 179–181 lines the beta-D-fructose 6-phosphate pocket; that stretch reads SVG. Residues 199 to 200 form an important for interaction with GCK region; it reads AV. A beta-D-fructose 1-phosphate-binding site is contributed by Glu-348. The tract at residues 463-465 is essential for interaction with GCK; it reads LLF.

The protein belongs to the GCKR family. In terms of assembly, interacts (fructose 6-phosphate bound form) with GCK.

It localises to the cytoplasm. It is found in the nucleus. The protein localises to the mitochondrion. Its function is as follows. Regulates glucokinase (GCK) by forming an inactive complex with this enzyme. Acts by promoting GCK recruitment to the nucleus, possibly to provide a reserve of GCK that can be quickly released in the cytoplasm after a meal. The affinity of GCKR for GCK is modulated by fructose metabolites: GCKR with bound fructose 6-phosphate has increased affinity for GCK, while GCKR with bound fructose 1-phosphate has strongly decreased affinity for GCK and does not inhibit GCK activity. This chain is Glucokinase regulatory protein, found in Mus musculus (Mouse).